A 98-amino-acid chain; its full sequence is ESAT-6-like protein EsxW (98 aa).

This sequence belongs to the WXG100 family. CFP-10 subfamily. As to quaternary structure, forms a tight 1:1 complex with EsxV. The complex is destabilized at low pH. Unfolding of the proteins is required for dissociation of the complex and membrane binding.

The protein resides in the secreted. The sequence is that of ESAT-6-like protein EsxW from Mycobacterium tuberculosis (strain ATCC 25618 / H37Rv).